Here is a 111-residue protein sequence, read N- to C-terminus: MFTRRFAASMVGTTLTAATLGLAALGFAGTASASSTDEAFLAQLQADGITPPSAARAIKDAHAVCDALDEGHSAKAVIKAVAKATGLSAKGAKTFAVDAASAYCPQYVTSS.

To M.tuberculosis Rv1271c.

This is an uncharacterized protein from Mycobacterium bovis (strain ATCC BAA-935 / AF2122/97).